The primary structure comprises 193 residues: Holliday junction branch migration complex subunit RuvA (193 aa).

Positions 1 to 64 are domain I; it reads MIGRIAGVLL…EDAHLLYGFG (64 aa). Residues 65-139 form a domain II region; that stretch reads TAEERSTFRE…GKIGADLGAM (75 aa). The tract at residues 139-143 is flexible linker; that stretch reads MAGAA. The interval 144–193 is domain III; it reads SASDHASDILNALLALGYSEKEALAAVKNVPAGTGVSEGIKLALKALSKG.

This sequence belongs to the RuvA family. Homotetramer. Forms an RuvA(8)-RuvB(12)-Holliday junction (HJ) complex. HJ DNA is sandwiched between 2 RuvA tetramers; dsDNA enters through RuvA and exits via RuvB. An RuvB hexamer assembles on each DNA strand where it exits the tetramer. Each RuvB hexamer is contacted by two RuvA subunits (via domain III) on 2 adjacent RuvB subunits; this complex drives branch migration. In the full resolvosome a probable DNA-RuvA(4)-RuvB(12)-RuvC(2) complex forms which resolves the HJ.

Its subcellular location is the cytoplasm. The RuvA-RuvB-RuvC complex processes Holliday junction (HJ) DNA during genetic recombination and DNA repair, while the RuvA-RuvB complex plays an important role in the rescue of blocked DNA replication forks via replication fork reversal (RFR). RuvA specifically binds to HJ cruciform DNA, conferring on it an open structure. The RuvB hexamer acts as an ATP-dependent pump, pulling dsDNA into and through the RuvAB complex. HJ branch migration allows RuvC to scan DNA until it finds its consensus sequence, where it cleaves and resolves the cruciform DNA. The sequence is that of Holliday junction branch migration complex subunit RuvA from Paraburkholderia xenovorans (strain LB400).